A 408-amino-acid polypeptide reads, in one-letter code: tRNA-specific 2-thiouridylase MnmA (408 aa).

ATP-binding positions include 27–34 (AMSGGVDS) and leucine 53. The active-site Nucleophile is cysteine 121. Residues cysteine 121 and cysteine 222 are joined by a disulfide bond. Position 145 (glycine 145) interacts with ATP. The segment at 172 to 174 (RDQ) is interaction with tRNA. Catalysis depends on cysteine 222, which acts as the Cysteine persulfide intermediate.

Belongs to the MnmA/TRMU family.

The protein localises to the cytoplasm. The enzyme catalyses S-sulfanyl-L-cysteinyl-[protein] + uridine(34) in tRNA + AH2 + ATP = 2-thiouridine(34) in tRNA + L-cysteinyl-[protein] + A + AMP + diphosphate + H(+). Functionally, catalyzes the 2-thiolation of uridine at the wobble position (U34) of tRNA, leading to the formation of s(2)U34. The chain is tRNA-specific 2-thiouridylase MnmA from Rhizobium etli (strain ATCC 51251 / DSM 11541 / JCM 21823 / NBRC 15573 / CFN 42).